We begin with the raw amino-acid sequence, 355 residues long: Uroporphyrinogen decarboxylase (355 aa).

Substrate is bound by residues arginine 27 to arginine 31, phenylalanine 46, aspartate 78, tyrosine 155, serine 210, and histidine 328.

It belongs to the uroporphyrinogen decarboxylase family. As to quaternary structure, homodimer.

The protein localises to the cytoplasm. The enzyme catalyses uroporphyrinogen III + 4 H(+) = coproporphyrinogen III + 4 CO2. It participates in porphyrin-containing compound metabolism; protoporphyrin-IX biosynthesis; coproporphyrinogen-III from 5-aminolevulinate: step 4/4. Catalyzes the decarboxylation of four acetate groups of uroporphyrinogen-III to yield coproporphyrinogen-III. This Pseudomonas aeruginosa (strain ATCC 15692 / DSM 22644 / CIP 104116 / JCM 14847 / LMG 12228 / 1C / PRS 101 / PAO1) protein is Uroporphyrinogen decarboxylase.